Reading from the N-terminus, the 711-residue chain is Ubiquitin carboxyl-terminal hydrolase BAP1 (711 aa).

One can recognise a UCH catalytic domain in the interval 4–234 (GWLELESDPG…ARLHVLKVNR (231 aa)). The Arg-finger motif motif lies at 56–60 (RRSRR). Catalysis depends on C91, which acts as the Nucleophile. The Proton donor role is filled by H169. The tract at residues 255–337 (THKSQESQLP…VPPNPTPIVQ (83 aa)) is disordered. The span at 269–278 (PASSKSPLAL) shows a compositional bias: low complexity. S274 bears the Phosphoserine mark. An HBM-like motif motif is present at residues 345–348 (NHNY). Residues S351 and S377 each carry the phosphoserine modification. Disordered regions lie at residues 354-420 (QEEE…GQLS) and 446-506 (SIKT…SPVT). Over residues 377–391 (SDDEDDYEDEEEDDA) the composition is skewed to acidic residues. Residues 462–506 (THSQPSPTPSNESTDTASEIGSAFNSPLRSPIRSANPTRPSSPVT) show a composition bias toward polar residues. The residue at position 475 (T475) is a Phosphothreonine. Phosphoserine occurs at positions 503, 519, 567, and 579. Residues 557–605 (LTESGKGSSPSIRPSQGSQGSGSPEEKEVVEAVDSREKPGLVRPSESLN) form a disordered region. Low complexity predominate over residues 563-579 (GSSPSIRPSQGSQGSGS). The interval 578-703 (GSPEEKEVVE…QRKPDRRKRS (126 aa)) is interaction with BRCA1. Basic and acidic residues predominate over residues 580–596 (PEEKEVVEAVDSREKPG). Positions 612–643 (KELLALLKCVEAEIANYEACLKEEVEKRKKFK) form a coiled coil. The interaction with YY1 stretch occupies residues 624-668 (EIANYEACLKEEVEKRKKFKIDDQRRTHNYDEFICTFISMLAQEG). One can recognise a ULD domain in the interval 652-680 (NYDEFICTFISMLAQEGMLANLVEQNISV). The tract at residues 681–683 (RRR) is interaction with nucleosomal DNA forming a DNA clamp with ASXL1. Residues 681–704 (RRRQGVSIGRLHKQRKPDRRKRSR) carry the Classical bipartite Nuclear localization signal (NLS) motif. Residues 685-711 (GVSIGRLHKQRKPDRRKRSRPYKAKRQ) form a disordered region. The tract at residues 695–711 (RKPDRRKRSRPYKAKRQ) is positively charged C-terminal extension (CTE). Residues 699–704 (RRKRSR) carry the Nuclear localization signal motif. The Non-classical PY-nuclear localization signal (PY-NLS) motif lies at 699-706 (RRKRSRPY).

The protein belongs to the peptidase C12 family. BAP1 subfamily. Core component of the polycomb repressive deubiquitinase (PR-DUB) complex, at least composed of BAP1, one of ASXL1, ASXL2 or (probably) ASXL3, and one of MBD5 or MBD6. The PR-DUB core associates with a number of accessory proteins, including FOXK1, FOXK2, KDM1B, HCFC1, YY1 and OGT; KDM1B specifically associates with ASXL2 PR-DUB complexes. The BAP1 deubiquitinase activity is not required for PR-DUB assembly. Homodimerizes (via coiled-coil hinge-region between the UCH and ULD domains) to mediate assembly of 2 copies of the BAP1-ASXL heterodimer into a bisymmetric tetramer; dimerization enhances association with nucleosomes. The PR-DUB complex associates with nucleosomes to mediate deubiquitination of 'lys-120' of histone H2AK118ub1 substrates; the association requires the positively charged C-terminal tail of BAP1. Interacts (via ULD domain) with ASXL1 (via DEUBAD domain); the interaction is direct and forms a ubiquitin binding cleft. The interaction with ASXL1 stabilizes BAP1 but is not required for nucleosome binding. Associates (via C-terminus) with nucleosome and chromatosome complexes through direct interaction with DNA and the histone3/4 dimer; this association displaces the histone-2A C-terminal tail, extending and orienting the H2AK118ub1 substrate towards the BAP1 deubiquitinase active site. Also interacts (via arginine finger) directly with the histone H2A-H2B acidic patch; this interaction is not critical for nucleosome-chromatosome association but may play a role in orienting the H2AK118ub1 substrate towards the PR-DUB complex active site. Interacts with BRCA1 (via the RING finger). Interacts (via HBM-like motif) with HCFC1. Interacts (via a C-terminal region overlapping the ULD domain) with YY1; the interaction is direct and requires the interaction with HCFC1. Interacts (when phosphorylated at Thr-475) with FOXK1. Interacts (when phosphorylated at Thr-475) with FOXK2; leading to recruitment of the PR-DUB complex and repression of FOXK2 target genes. Interacts (via non-classical PY-NLS) with TNPO1/transportin-1 (via HEAT repeats 8-12); the interaction is direct, mediates BAP1 nuclear localization and disrupts BAP1 homodimerization. Interacts (via C-terminus) with KPNA1/importin alpha5 and KPNA2/importin alpha1; these interactions can contribute to BAP1 nuclear localization but are less important than the interaction with TNPO1/transportin-1. The interaction with TNPO1/transportin-1 disrupts homodimerization and blocks ubiquitination by UBE2O. Ubiquitinated: monoubiquitinated at multiple sites within its nuclear localization signal (NLS) BY UBE2O, leading to cytoplasmic retention. Able to mediate autodeubiquitination via intramolecular interactions to counteract cytoplasmic retention. Monoubiquitinated on at least 4 sites near or within its PY-NLS.

It is found in the cytoplasm. Its subcellular location is the nucleus. The protein localises to the chromosome. The catalysed reaction is Thiol-dependent hydrolysis of ester, thioester, amide, peptide and isopeptide bonds formed by the C-terminal Gly of ubiquitin (a 76-residue protein attached to proteins as an intracellular targeting signal).. In terms of biological role, deubiquitinating enzyme that plays a key role in chromatin by mediating deubiquitination of histone H2A and HCFC1. Catalytic component of the polycomb repressive deubiquitinase (PR-DUB) complex, a complex that specifically mediates deubiquitination of histone H2A monoubiquitinated at 'Lys-120' (H2AK119ub1). Does not deubiquitinate monoubiquitinated histone H2B. The PR-DUB complex is an epigenetic regulator of gene expression and acts as a transcriptional coactivator, affecting genes involved in development, cell communication, signaling, cell proliferation and cell viability. Antagonizes PRC1 mediated H2AK119ub1 monoubiquitination. As part of the PR-DUB complex, associates with chromatin enriched in histone marks H3K4me1, H3K4me3, and H3K27Ac, but not in H3K27me3. Acts as a regulator of cell growth by mediating deubiquitination of HCFC1 N-terminal and C-terminal chains, with some specificity toward 'Lys-48'-linked polyubiquitin chains compared to 'Lys-63'-linked polyubiquitin chains. Deubiquitination of HCFC1 does not lead to increase stability of HCFC1. Interferes with the BRCA1 and BARD1 heterodimer activity by inhibiting their ability to mediate ubiquitination and autoubiquitination. It however does not mediate deubiquitination of BRCA1 and BARD1. Able to mediate autodeubiquitination via intramolecular interactions to counteract monoubiquitination at the nuclear localization signal (NLS), thereby protecting it from cytoplasmic sequestration. Negatively regulates epithelial-mesenchymal transition (EMT) of trophoblast stem cells during placental development by regulating genes involved in epithelial cell integrity, cell adhesion and cytoskeletal organization. In Bos taurus (Bovine), this protein is Ubiquitin carboxyl-terminal hydrolase BAP1 (BAP1).